Reading from the N-terminus, the 411-residue chain is Carbohydrate sulfotransferase 5 (411 aa).

Residues 1-30 (MGMRARVPKVAHSTRRPPAARMWLPRFSSK) lie on the Cytoplasmic side of the membrane. A helical; Signal-anchor for type II membrane protein transmembrane segment spans residues 31 to 48 (TVTVLLLAQTTCLLLFII). At 49 to 411 (SRPGPSSPAG…PDHFSWASPD (363 aa)) the chain is on the lumenal side. 71 to 77 (WRSGSSF) contributes to the 3'-phosphoadenylyl sulfate binding site. Asn138 carries N-linked (GlcNAc...) asparagine glycosylation. A 3'-phosphoadenylyl sulfate-binding site is contributed by 224-232 (RDPRAVLRS). N-linked (GlcNAc...) asparagine glycosylation is found at Asn327 and Asn350.

Belongs to the sulfotransferase 1 family. Gal/GlcNAc/GalNAc subfamily. As to expression, predominantly expressed in small and large intestines and colon. Weakly expressed in lymphocytes. Not expressed in other tissues. Down-regulated in colonic adenocarcinomas.

The protein localises to the golgi apparatus membrane. Sulfotransferase that utilizes 3'-phospho-5'-adenylyl sulfate (PAPS) as sulfonate donor to catalyze the transfer of sulfate to position 6 of non-reducing N-acetylglucosamine (GlcNAc) residues and O-linked sugars of mucin-type acceptors. Acts on the non-reducing terminal GlcNAc of short carbohydrate substrates. However, it does not transfer sulfate to longer carbohydrate substrates that have poly-N-acetyllactosamine structures. Has no activity toward keratan. Not involved in generating HEV-expressed ligands for SELL. Its substrate specificity may be influenced by its subcellular location. The chain is Carbohydrate sulfotransferase 5 (CHST5) from Homo sapiens (Human).